Consider the following 212-residue polypeptide: Interleukin-6 (212 aa).

Positions methionine 1 to proline 27 are cleaved as a signal peptide. Cysteines 72 and 78 form a disulfide. N-linked (GlcNAc...) asparagine glycosylation occurs at asparagine 73. Serine 81 bears the Phosphoserine mark. A disulfide bridge connects residues cysteine 101 and cysteine 111. An N-linked (GlcNAc...) asparagine glycan is attached at asparagine 172.

The protein belongs to the IL-6 superfamily. In terms of assembly, component of a hexamer of two molecules each of IL6, IL6R and IL6ST; first binds to IL6R to associate with the signaling subunit IL6ST. Interacts with IL6R (via the N-terminal ectodomain); this interaction may be affected by IL6R-binding with SORL1, hence decreasing IL6 cis signaling. Interacts with SORL1 (via the N-terminal ectodomain); this interaction leads to IL6 internalization and lysosomal degradation. May form a trimeric complex with the soluble SORL1 ectodomain and soluble IL6R receptor; this interaction might stabilize circulating IL6, hence promoting IL6 trans signaling.

It is found in the secreted. Functionally, cytokine with a wide variety of biological functions in immunity, tissue regeneration, and metabolism. Binds to IL6R, then the complex associates to the signaling subunit IL6ST/gp130 to trigger the intracellular IL6-signaling pathway. The interaction with the membrane-bound IL6R and IL6ST stimulates 'classic signaling', whereas the binding of IL6 and soluble IL6R to IL6ST stimulates 'trans-signaling'. Alternatively, 'cluster signaling' occurs when membrane-bound IL6:IL6R complexes on transmitter cells activate IL6ST receptors on neighboring receiver cells. Its function is as follows. IL6 is a potent inducer of the acute phase response. Rapid production of IL6 contributes to host defense during infection and tissue injury, but excessive IL6 synthesis is involved in disease pathology. In the innate immune response, is synthesized by myeloid cells, such as macrophages and dendritic cells, upon recognition of pathogens through toll-like receptors (TLRs) at the site of infection or tissue injury. In the adaptive immune response, is required for the differentiation of B cells into immunoglobulin-secreting cells. Plays a major role in the differentiation of CD4(+) T cell subsets. Essential factor for the development of T follicular helper (Tfh) cells that are required for the induction of germinal-center formation. Required to drive naive CD4(+) T cells to the Th17 lineage. Also required for proliferation of myeloma cells and the survival of plasmablast cells. Acts as an essential factor in bone homeostasis and on vessels directly or indirectly by induction of VEGF, resulting in increased angiogenesis activity and vascular permeability. Induces, through 'trans-signaling' and synergistically with IL1B and TNF, the production of VEGF. Involved in metabolic controls, is discharged into the bloodstream after muscle contraction increasing lipolysis and improving insulin resistance. 'Trans-signaling' in central nervous system also regulates energy and glucose homeostasis. Mediates, through GLP-1, crosstalk between insulin-sensitive tissues, intestinal L cells and pancreatic islets to adapt to changes in insulin demand. Also acts as a myokine. Plays a protective role during liver injury, being required for maintenance of tissue regeneration. Also has a pivotal role in iron metabolism by regulating HAMP/hepcidin expression upon inflammation or bacterial infection. Through activation of IL6ST-YAP-NOTCH pathway, induces inflammation-induced epithelial regeneration. The chain is Interleukin-6 (IL6) from Macaca thibetana (Pere David's macaque).